We begin with the raw amino-acid sequence, 218 residues long: Protein-methionine-sulfoxide reductase heme-binding subunit MsrQ (218 aa).

5 helical membrane passes run 12–32 (TLIK…LALF), 82–102 (MLGL…LWFD), 118–138 (PFIT…ITST), 150–170 (WQWL…HYWW), and 180–200 (QPII…FWAW).

It belongs to the MsrQ family. In terms of assembly, heterodimer of a catalytic subunit (MsrP) and a heme-binding subunit (MsrQ). Requires FMN as cofactor. The cofactor is heme b.

It localises to the cell inner membrane. Its function is as follows. Part of the MsrPQ system that repairs oxidized periplasmic proteins containing methionine sulfoxide residues (Met-O), using respiratory chain electrons. Thus protects these proteins from oxidative-stress damage caused by reactive species of oxygen and chlorine generated by the host defense mechanisms. MsrPQ is essential for the maintenance of envelope integrity under bleach stress, rescuing a wide series of structurally unrelated periplasmic proteins from methionine oxidation. MsrQ provides electrons for reduction to the reductase catalytic subunit MsrP, using the quinone pool of the respiratory chain. The sequence is that of Protein-methionine-sulfoxide reductase heme-binding subunit MsrQ from Herminiimonas arsenicoxydans.